A 651-amino-acid chain; its full sequence is Crossover junction endonuclease MUS81 (651 aa).

Residues 99–124 (RKHEVSDTSNLPDAKPKKQRKQKQYI) form a disordered region. Basic residues predominate over residues 115 to 124 (KKQRKQKQYI). The ERCC4 domain occupies 361–458 (ILIIDNREIR…QFYYLVEDVV (98 aa)).

Belongs to the XPF family. As to quaternary structure, interacts with EME1. The cofactor is Mg(2+).

It localises to the nucleus. Interacts with EME1 to form a DNA structure-specific endonuclease with substrate preference for branched DNA structures with a 5'-end at the branch nick. Typical substrates include 3'-flap structures, D-loops, replication forks and nicked Holliday junctions. May be required in mitosis for the processing of stalled or collapsed replication fork intermediates. May be required in meiosis for the repair of meiosis-specific double strand breaks subsequent to single-end invasion (SEI). This is Crossover junction endonuclease MUS81 (MUS81) from Debaryomyces hansenii (strain ATCC 36239 / CBS 767 / BCRC 21394 / JCM 1990 / NBRC 0083 / IGC 2968) (Yeast).